Here is a 357-residue protein sequence, read N- to C-terminus: GTPase Obg (357 aa).

Residues methionine 1–leucine 159 form the Obg domain. The region spanning alanine 160–glutamate 343 is the OBG-type G domain. GTP-binding positions include glycine 166–serine 173, phenylalanine 191–tyrosine 195, aspartate 213–glycine 216, asparagine 293–aspartate 296, and serine 324–valine 326. The Mg(2+) site is built by serine 173 and threonine 193.

This sequence belongs to the TRAFAC class OBG-HflX-like GTPase superfamily. OBG GTPase family. As to quaternary structure, monomer. Requires Mg(2+) as cofactor.

It localises to the cytoplasm. Functionally, an essential GTPase which binds GTP, GDP and possibly (p)ppGpp with moderate affinity, with high nucleotide exchange rates and a fairly low GTP hydrolysis rate. Plays a role in control of the cell cycle, stress response, ribosome biogenesis and in those bacteria that undergo differentiation, in morphogenesis control. The protein is GTPase Obg of Xylella fastidiosa (strain M12).